The chain runs to 173 residues: Crossover junction endodeoxyribonuclease RuvC (173 aa).

Active-site residues include aspartate 8, glutamate 67, and aspartate 139. Residues aspartate 8, glutamate 67, and aspartate 139 each contribute to the Mg(2+) site.

It belongs to the RuvC family. Homodimer which binds Holliday junction (HJ) DNA. The HJ becomes 2-fold symmetrical on binding to RuvC with unstacked arms; it has a different conformation from HJ DNA in complex with RuvA. In the full resolvosome a probable DNA-RuvA(4)-RuvB(12)-RuvC(2) complex forms which resolves the HJ. Requires Mg(2+) as cofactor.

Its subcellular location is the cytoplasm. It carries out the reaction Endonucleolytic cleavage at a junction such as a reciprocal single-stranded crossover between two homologous DNA duplexes (Holliday junction).. The RuvA-RuvB-RuvC complex processes Holliday junction (HJ) DNA during genetic recombination and DNA repair. Endonuclease that resolves HJ intermediates. Cleaves cruciform DNA by making single-stranded nicks across the HJ at symmetrical positions within the homologous arms, yielding a 5'-phosphate and a 3'-hydroxyl group; requires a central core of homology in the junction. The consensus cleavage sequence is 5'-(A/T)TT(C/G)-3'. Cleavage occurs on the 3'-side of the TT dinucleotide at the point of strand exchange. HJ branch migration catalyzed by RuvA-RuvB allows RuvC to scan DNA until it finds its consensus sequence, where it cleaves and resolves the cruciform DNA. This is Crossover junction endodeoxyribonuclease RuvC from Shewanella sediminis (strain HAW-EB3).